The chain runs to 351 residues: Serine/threonine-protein kinase ZRK1 (351 aa).

The Protein kinase domain occupies 60–347; the sequence is FDSSCFVSQD…KELKQIEASL (288 aa). ATP is bound by residues 66-74 and Lys87; that span reads VSQDVYYKW. Asp191 (proton acceptor) is an active-site residue.

This sequence belongs to the protein kinase superfamily. Ser/Thr protein kinase family. ZRK subfamily. In terms of assembly, component of a stable high-order oligomeric complex made of RKS1 and RPP13L4/ZAR1 which recruits Xanthomonas campestris effector XopAC/AvrAC-mediated uridylylated PBL2 in the presence of ATP to form a wheel-like pentameric resistosome; this complex triggers immunity toward X.campestris in vascular tissues. Interacts with RPP13L4/ZAR1 and uridylylated PBL2. Expressed at high levels in germinating seeds and at lower levels in adult leaves.

The catalysed reaction is L-seryl-[protein] + ATP = O-phospho-L-seryl-[protein] + ADP + H(+). It carries out the reaction L-threonyl-[protein] + ATP = O-phospho-L-threonyl-[protein] + ADP + H(+). Its function is as follows. Serine/threonine-protein kinase that confers a broad-spectrum quantitative disease resistance (QDR) to the pathogenic biotrophic bacteria Xanthomonas campestris (e.g. pv. campestris (Xcc), pv. raphani, pv. armoriaceae and pv. incanae) by restricting bacterial spread to the vascular system from the infection site; X.campestris causes black rot disease in crops. Seems to not have any kinase activity. The chain is Serine/threonine-protein kinase ZRK1 from Arabidopsis thaliana (Mouse-ear cress).